Reading from the N-terminus, the 621-residue chain is Bifunctional 3'-phosphoadenosine 5'-phosphosulfate synthase 2 (621 aa).

The interval 1 to 216 is adenylyl-sulfate kinase; that stretch reads MSANFKMNHK…VVELLQEQNI (216 aa). 53–58 serves as a coordination point for ATP; that stretch reads GAGKTT. Adenosine 5'-phosphosulfate is bound by residues 80–83, Phe-92, 97–100, 123–124, Lys-162, and 175–176; these read DNVR, REEN, IS, and GF. ATP-binding positions include Ser-198, 415-418, 517-521, and Ala-559; these read QLRN and GRDPA. The segment at 225–621 is sulfate adenylyltransferase; it reads IHELFVPENK…DYYRSLEKTN (397 aa).

This sequence in the N-terminal section; belongs to the APS kinase family. The protein in the C-terminal section; belongs to the sulfate adenylyltransferase family. As to expression, expressed in liver, cartilage, skin and brain.

It carries out the reaction sulfate + ATP + H(+) = adenosine 5'-phosphosulfate + diphosphate. It catalyses the reaction adenosine 5'-phosphosulfate + ATP = 3'-phosphoadenylyl sulfate + ADP + H(+). Its pathway is sulfur metabolism; sulfate assimilation. Functionally, bifunctional enzyme with both ATP sulfurylase and APS kinase activity, which mediates two steps in the sulfate activation pathway. The first step is the transfer of a sulfate group to ATP to yield adenosine 5'-phosphosulfate (APS), and the second step is the transfer of a phosphate group from ATP to APS yielding 3'-phosphoadenylylsulfate/PAPS, the activated sulfate donor used by sulfotransferases. In mammals, PAPS is the sole source of sulfate while APS appears to only be an intermediate in the sulfate-activation pathway. May have an important role in skeletogenesis during postnatal growth. The protein is Bifunctional 3'-phosphoadenosine 5'-phosphosulfate synthase 2 (Papss2) of Mus musculus (Mouse).